A 217-amino-acid polypeptide reads, in one-letter code: Ribosomal RNA small subunit methyltransferase G (217 aa).

Residues G78, F83, A129–E130, and R146 each bind S-adenosyl-L-methionine.

Belongs to the methyltransferase superfamily. RNA methyltransferase RsmG family.

The protein localises to the cytoplasm. The enzyme catalyses guanosine(527) in 16S rRNA + S-adenosyl-L-methionine = N(7)-methylguanosine(527) in 16S rRNA + S-adenosyl-L-homocysteine. Specifically methylates the N7 position of guanine in position 527 of 16S rRNA. This Geobacter sp. (strain M21) protein is Ribosomal RNA small subunit methyltransferase G.